Consider the following 681-residue polypeptide: Methionine--tRNA ligase (681 aa).

The short motif at 15 to 25 is the 'HIGH' region element; the sequence is PYANGPIHLGH. Zn(2+)-binding residues include cysteine 146, cysteine 149, cysteine 159, and cysteine 162. The 'KMSKS' region motif lies at 332-336; sequence KMSKS. Residue lysine 335 participates in ATP binding. The disordered stretch occupies residues 547 to 569; sequence DNMAQAPKDNGKAKKDKKEAKSE. Residues 555 to 569 are compositionally biased toward basic and acidic residues; that stretch reads DNGKAKKDKKEAKSE. The tRNA-binding domain maps to 580-681; sequence DFAKIDLRIA…SGAQPGMQVK (102 aa).

The protein belongs to the class-I aminoacyl-tRNA synthetase family. MetG type 1 subfamily. In terms of assembly, homodimer. Zn(2+) serves as cofactor.

The protein localises to the cytoplasm. The catalysed reaction is tRNA(Met) + L-methionine + ATP = L-methionyl-tRNA(Met) + AMP + diphosphate. Is required not only for elongation of protein synthesis but also for the initiation of all mRNA translation through initiator tRNA(fMet) aminoacylation. The sequence is that of Methionine--tRNA ligase from Hahella chejuensis (strain KCTC 2396).